A 172-amino-acid chain; its full sequence is 3-hydroxydecanoyl-[acyl-carrier-protein] dehydratase (172 aa).

His71 is an active-site residue.

It belongs to the thioester dehydratase family. FabA subfamily. In terms of assembly, homodimer.

It is found in the cytoplasm. The enzyme catalyses a (3R)-hydroxyacyl-[ACP] = a (2E)-enoyl-[ACP] + H2O. It catalyses the reaction (3R)-hydroxydecanoyl-[ACP] = (2E)-decenoyl-[ACP] + H2O. The catalysed reaction is (2E)-decenoyl-[ACP] = (3Z)-decenoyl-[ACP]. The protein operates within lipid metabolism; fatty acid biosynthesis. Necessary for the introduction of cis unsaturation into fatty acids. Catalyzes the dehydration of (3R)-3-hydroxydecanoyl-ACP to E-(2)-decenoyl-ACP and then its isomerization to Z-(3)-decenoyl-ACP. Can catalyze the dehydratase reaction for beta-hydroxyacyl-ACPs with saturated chain lengths up to 16:0, being most active on intermediate chain length. In Sodalis glossinidius (strain morsitans), this protein is 3-hydroxydecanoyl-[acyl-carrier-protein] dehydratase.